The primary structure comprises 258 residues: Myelin proteolipid protein (258 aa).

Residues 1 to 22 (MFPVRHALLCKALGCYDCCIRC) are Cytoplasmic-facing. S-palmitoyl cysteine attachment occurs at residues C18, C19, and C22. A helical membrane pass occupies residues 23–48 (LGAVPYPSLVSTLLCFTGMALFCGCG). Residues 49 to 82 (HEALAHTEVLVETYFVRNIQDYVILASFIKYFQY) lie on the Extracellular side of the membrane. A helical transmembrane segment spans residues 83 to 103 (VIYGLASFFFLYCILLLAEGF). The Cytoplasmic portion of the chain corresponds to 104–128 (YTTSAVKQTFGEFRSTRCGRCLSLT). Residues C121 and C124 are each lipidated (S-palmitoyl cysteine). A helical membrane pass occupies residues 129–149 (FIIVTYVLAVIWLAVFAFTAI). Residues 150-218 (PSSSSLIWHR…KTKEFFVTYD (69 aa)) lie on the Extracellular side of the membrane. Cysteines 181 and 200 form a disulfide. A helical membrane pass occupies residues 219–239 (LYIAAFAGAGIALLALFLYVV). Topologically, residues 240 to 258 (ATTYNYAVLRFLGRKGLRC) are cytoplasmic.

Belongs to the myelin proteolipid protein family. In terms of tissue distribution, central nervous system. Highest levels in spinal cord and medulla oblongata.

It is found in the cell membrane. In terms of biological role, this is the major myelin protein from the central nervous system. It plays an important role in the formation or maintenance of the multilamellar structure of myelin. May be involved in neuron and glial cell differentiation. In Oncorhynchus mykiss (Rainbow trout), this protein is Myelin proteolipid protein (plp).